Here is a 421-residue protein sequence, read N- to C-terminus: Osmoprotective compounds-binding protein GgtB (421 aa).

Residues 1–18 (MKFFKITTLIISLIVLTS) form the signal peptide. Cys-19 carries the N-palmitoyl cysteine lipid modification. Cys-19 carries S-diacylglycerol cysteine lipidation.

Belongs to the bacterial solute-binding protein 1 family. In terms of assembly, the complex is composed of two ATP-binding proteins (GgtA), two transmembrane proteins (GgtC and GgtD) and a solute-binding protein (GgtB).

The protein localises to the cell membrane. Its function is as follows. Part of the ABC transporter complex GgtABCD involved in the uptake of the osmoprotective compounds glucosylglycerol (GG), sucrose and trehalose. Binds glucosylglycerol and exhibits a somewhat lower affinity towards sucrose and a substantially lower affinity towards trehalose. This chain is Osmoprotective compounds-binding protein GgtB, found in Synechocystis sp. (strain ATCC 27184 / PCC 6803 / Kazusa).